Reading from the N-terminus, the 188-residue chain is Guanylate kinase (188 aa).

In terms of domain architecture, Guanylate kinase-like spans 8-188 (GRIVVLAGPS…AVAAISEILR (181 aa)). 15-22 (GPSAVGKS) serves as a coordination point for ATP.

It belongs to the guanylate kinase family.

The protein localises to the cytoplasm. It catalyses the reaction GMP + ATP = GDP + ADP. Its function is as follows. Essential for recycling GMP and indirectly, cGMP. This is Guanylate kinase from Corynebacterium jeikeium (strain K411).